Here is a 176-residue protein sequence, read N- to C-terminus: MNLWKDIEPGPSVPEVVYAVVEIPKGSRNKYEYHKDLQAFALDRVLYSAVFYPAEYGIIPRTLYDDGDPMDILVLMDEPTFPGCIIESRPIGLLRMIDGGDQDDKILAVPVADPHFADVKDISDIPEHNLKEIANFFETYKKLEGKKTETLGWEGAEKAFEAVNHSIELYRKKYME.

3 residues coordinate substrate: Lys30, Arg44, and Tyr56. Residues Asp66, Asp71, and Asp103 each coordinate Mg(2+). Tyr140 provides a ligand contact to substrate.

This sequence belongs to the PPase family. In terms of assembly, homohexamer. The cofactor is Mg(2+).

The protein resides in the cytoplasm. It carries out the reaction diphosphate + H2O = 2 phosphate + H(+). Catalyzes the hydrolysis of inorganic pyrophosphate (PPi) forming two phosphate ions. This Methanothermobacter thermautotrophicus (strain ATCC 29096 / DSM 1053 / JCM 10044 / NBRC 100330 / Delta H) (Methanobacterium thermoautotrophicum) protein is Inorganic pyrophosphatase.